Reading from the N-terminus, the 872-residue chain is Cellulose synthase catalytic subunit [UDP-forming] (872 aa).

Helical transmembrane passes span 30 to 50 (SAFS…FIPL), 151 to 171 (ILGI…TQPF), 173 to 193 (PLAQ…VRRM), and 230 to 250 (LVCG…LVLG). Residues 271-364 (LWPSVDIFVP…FVSIFDCDHV (94 aa)) form a catalytic subdomain A region. Residue aspartate 313 is part of the active site. 2 residues coordinate substrate: aspartate 360 and aspartate 362. The tract at residues 441-501 (KPLDEIGGIA…GQRIRWARGM (61 aa)) is catalytic subdomain B. Aspartate 457 is a catalytic residue. A run of 5 helical transmembrane segments spans residues 525 to 545 (VNAM…TAPL), 547 to 567 (FLLL…LFVL), 592 to 612 (IYET…LINP), 640 to 660 (IFLV…YFYG), and 668 to 688 (VVVS…AVAV). The region spanning 694–790 (QVRRSHRVEM…QHIDFVQCTF (97 aa)) is the PilZ domain. A helical transmembrane segment spans residues 833–853 (SVKGIFRVLTSLVSWVVSFIP).

It belongs to the glycosyltransferase 2 family. Mg(2+) serves as cofactor.

The protein localises to the cell inner membrane. It catalyses the reaction [(1-&gt;4)-beta-D-glucosyl](n) + UDP-alpha-D-glucose = [(1-&gt;4)-beta-D-glucosyl](n+1) + UDP + H(+). Its pathway is glycan metabolism; bacterial cellulose biosynthesis. Activated by bis-(3'-5') cyclic diguanylic acid (c-di-GMP). In terms of biological role, catalytic subunit of cellulose synthase. It polymerizes uridine 5'-diphosphate glucose to cellulose, which is produced as an extracellular component for mechanical and chemical protection at the onset of the stationary phase, when the cells exhibit multicellular behavior (rdar morphotype). Coexpression of cellulose and thin aggregative fimbriae leads to a hydrophobic network with tightly packed cells embedded in a highly inert matrix. The chain is Cellulose synthase catalytic subunit [UDP-forming] (bcsA) from Escherichia coli O157:H7.